The following is a 261-amino-acid chain: Thiamine thiazole synthase (261 aa).

NAD(+) contacts are provided by residues S40, 59–60 (ER), G67, V133, and 159–161 (HVD). Positions 161 and 176 each coordinate Fe cation. NAD(+) is bound by residues S179 and M226. R236 provides a ligand contact to glycine.

This sequence belongs to the THI4 family. Homooctamer; tetramer of dimers. It depends on Fe(2+) as a cofactor.

The enzyme catalyses hydrogen sulfide + glycine + NAD(+) = ADP-5-ethyl-4-methylthiazole-2-carboxylate + nicotinamide + 3 H2O + H(+). The protein operates within cofactor biosynthesis; thiamine diphosphate biosynthesis. Functionally, involved in the biosynthesis of the thiazole moiety of thiamine. Catalyzes the conversion of NAD and glycine to adenosine diphosphate 5-(2-hydroxyethyl)-4-methylthiazole-2-carboxylate (ADT), an adenylated thiazole intermediate, using free sulfide as a source of sulfur. The protein is Thiamine thiazole synthase of Methanococcus vannielii (strain ATCC 35089 / DSM 1224 / JCM 13029 / OCM 148 / SB).